The chain runs to 146 residues: Snaclec coagulation factor IX/factor X-binding protein subunit B (146 aa).

Positions 1–23 are cleaved as a signal peptide; that stretch reads MGRFIFMSFGFLVVFLSLSGTAA. Residues 24–146 form the C-type lectin domain; the sequence is DCPSDWSSYE…MAQFVCEFQA (123 aa). 3 disulfide bridges follow: Cys25–Cys36, Cys53–Cys142, and Cys119–Cys134. Positions 64, 66, and 70 each coordinate Ca(2+). Glu143 serves as a coordination point for Ca(2+).

Belongs to the snaclec family. Heterodimer with subunit A of IX/X-bp or IX-bp; disulfide-linked. In terms of tissue distribution, expressed by the venom gland.

Its subcellular location is the secreted. Functionally, when linked to subunit A of IX/X-bp, anticoagulant protein which binds to the gamma-carboxyglutamic acid-domain regions of factors IX (F9) and factor X (10) in the presence of calcium with a 1 to 1 stoichiometry. When linked to subunit A of IX-bp, anticoagulant protein which binds to the gamma-carboxyglutamic acid-domain regions of factor IX (but not to factor X) in the presence of calcium with a 1 to 1 stoichiometry. This chain is Snaclec coagulation factor IX/factor X-binding protein subunit B, found in Protobothrops flavoviridis (Habu).